Reading from the N-terminus, the 181-residue chain is ADP-ribosylation factor 1 (181 aa).

The N-myristoyl glycine moiety is linked to residue Gly-2. GTP is bound by residues Gly-24 to Thr-31, Asp-67 to Gln-71, and Asn-126 to Asp-129.

This sequence belongs to the small GTPase superfamily. Arf family.

The protein resides in the golgi apparatus. The enzyme catalyses GTP + H2O = GDP + phosphate + H(+). In terms of biological role, GTP-binding protein involved in protein trafficking; may modulate vesicle budding and uncoating within the Golgi apparatus. The polypeptide is ADP-ribosylation factor 1 (ARF1) (Daucus carota (Wild carrot)).